A 332-amino-acid chain; its full sequence is Galactinol synthase 7 (332 aa).

Lys-101 is an active-site residue. Asp-117, Asp-119, and His-255 together coordinate Mn(2+).

Belongs to the glycosyltransferase 8 family. Galactosyltransferase subfamily. A divalent metal cation is required as a cofactor.

The protein resides in the cytoplasm. The catalysed reaction is myo-inositol + UDP-alpha-D-galactose = alpha-D-galactosyl-(1-&gt;3)-1D-myo-inositol + UDP + H(+). Galactinol synthase involved in the biosynthesis of raffinose family oligosaccharides (RFOs) that function as osmoprotectants. May promote plant stress tolerance. In Arabidopsis thaliana (Mouse-ear cress), this protein is Galactinol synthase 7 (GOLS7).